The chain runs to 140 residues: UPF0654 protein C22G7.11c (140 aa).

2 disordered regions span residues 1 to 88 and 110 to 140; these read MPDP…DPMK and YKAT…ETQA. Positions 24 to 33 are enriched in basic and acidic residues; the sequence is AKERAEDYIE. The segment covering 34–44 has biased composition (polar residues); the sequence is SHSSGQETGDY. Acidic residues predominate over residues 54 to 71; it reads DYEDLGDYDEDADFDNEE.

The protein belongs to the UPF0654 (con-6) family.

The sequence is that of UPF0654 protein C22G7.11c from Schizosaccharomyces pombe (strain 972 / ATCC 24843) (Fission yeast).